The sequence spans 188 residues: dCTP deaminase (188 aa).

DCTP is bound by residues 111-116 (KSTYAR), 135-137 (TLE), Q156, Y170, and Q180. Residue E137 is the Proton donor/acceptor of the active site.

Belongs to the dCTP deaminase family. As to quaternary structure, homotrimer.

The enzyme catalyses dCTP + H2O + H(+) = dUTP + NH4(+). Its pathway is pyrimidine metabolism; dUMP biosynthesis; dUMP from dCTP (dUTP route): step 1/2. Its function is as follows. Catalyzes the deamination of dCTP to dUTP. The chain is dCTP deaminase from Neisseria meningitidis serogroup B (strain ATCC BAA-335 / MC58).